The primary structure comprises 221 residues: Glutathione S-transferase A3 (221 aa).

Ala-2 is subject to N-acetylalanine. Residues 3–83 (GKPVLHYFDG…YIASKYNLYG (81 aa)) form the GST N-terminal domain. Position 4 is an N6-succinyllysine (Lys-4). Residues Tyr-9, Arg-45, 54-55 (QV), and 67-68 (QT) each bind glutathione. In terms of domain architecture, GST C-terminal spans 85–207 (DMKERAIIDM…LQPGSQRKPF (123 aa)).

In terms of assembly, homodimer.

The protein localises to the cytoplasm. The catalysed reaction is RX + glutathione = an S-substituted glutathione + a halide anion + H(+). It carries out the reaction androst-5-ene-3,17-dione = androst-4-ene-3,17-dione. It catalyses the reaction pregn-5-ene-3,20-dione = progesterone. Conjugation of reduced glutathione to a wide number of exogenous and endogenous hydrophobic electrophiles. Catalyzes isomerization reactions that contribute to the biosynthesis of steroid hormones. Efficiently catalyze obligatory double-bond isomerizations of delta(5)-androstene-3,17-dione and delta(5)-pregnene-3,20-dione, precursors to testosterone and progesterone, respectively. Has a high catalytic activity for aflatoxin B1-8,9 epoxide. This is Glutathione S-transferase A3 from Mus musculus (Mouse).